The sequence spans 160 residues: Putative flagellin YvzB (160 aa).

The protein belongs to the bacterial flagellin family. In terms of assembly, interacts with FliW.

The protein resides in the bacterial flagellum. In Bacillus subtilis (strain 168), this protein is Putative flagellin YvzB (yvzB).